The sequence spans 637 residues: Chaperone protein HtpG (637 aa).

Positions 1–345 (MSQQETHGFQ…SNDLPLNVSR (345 aa)) are a; substrate-binding. A b region spans residues 346–562 (EILQDNHITK…EGEMSTQMIK (217 aa)). The segment at 563 to 637 (LMQAAGQPVP…MNQMLLANLK (75 aa)) is c.

It belongs to the heat shock protein 90 family. In terms of assembly, homodimer.

Its subcellular location is the cytoplasm. Functionally, molecular chaperone. Has ATPase activity. The sequence is that of Chaperone protein HtpG from Shewanella oneidensis (strain ATCC 700550 / JCM 31522 / CIP 106686 / LMG 19005 / NCIMB 14063 / MR-1).